The following is a 449-amino-acid chain: Cortexillin-2 (449 aa).

The tract at residues 1 to 231 (MTDLHKEWEK…ILYTSLFFHA (231 aa)) is actin-binding. Calponin-homology (CH) domains lie at 10–119 (KVQE…RKYR) and 128–233 (KSSE…HAYR). Coiled-coil stretches lie at residues 232 to 364 (YRAK…AEGL) and 408 to 441 (QFEEQAKRLGSKVENENISLEKYLSLKEEELKSA).

This sequence belongs to the cortexillin family. In terms of assembly, homodimer; parallel.

Its subcellular location is the cytoplasm. The protein localises to the cytoskeleton. Actin-bundling protein. When linked to F-actin the actin filaments form preferentially anti-parallel bundles that associate into meshworks. Plays a major role in cytokinesis. This is Cortexillin-2 (ctxB) from Heterostelium pallidum (strain ATCC 26659 / Pp 5 / PN500) (Cellular slime mold).